A 177-amino-acid chain; its full sequence is Adenine phosphoribosyltransferase (177 aa).

This sequence belongs to the purine/pyrimidine phosphoribosyltransferase family. As to quaternary structure, homodimer.

It localises to the cytoplasm. It carries out the reaction AMP + diphosphate = 5-phospho-alpha-D-ribose 1-diphosphate + adenine. The protein operates within purine metabolism; AMP biosynthesis via salvage pathway; AMP from adenine: step 1/1. Catalyzes a salvage reaction resulting in the formation of AMP, that is energically less costly than de novo synthesis. The chain is Adenine phosphoribosyltransferase from Chlorobium phaeovibrioides (strain DSM 265 / 1930) (Prosthecochloris vibrioformis (strain DSM 265)).